We begin with the raw amino-acid sequence, 95 residues long: Aspartyl/glutamyl-tRNA(Asn/Gln) amidotransferase subunit C (95 aa).

Belongs to the GatC family. Heterotrimer of A, B and C subunits.

It carries out the reaction L-glutamyl-tRNA(Gln) + L-glutamine + ATP + H2O = L-glutaminyl-tRNA(Gln) + L-glutamate + ADP + phosphate + H(+). The catalysed reaction is L-aspartyl-tRNA(Asn) + L-glutamine + ATP + H2O = L-asparaginyl-tRNA(Asn) + L-glutamate + ADP + phosphate + 2 H(+). Allows the formation of correctly charged Asn-tRNA(Asn) or Gln-tRNA(Gln) through the transamidation of misacylated Asp-tRNA(Asn) or Glu-tRNA(Gln) in organisms which lack either or both of asparaginyl-tRNA or glutaminyl-tRNA synthetases. The reaction takes place in the presence of glutamine and ATP through an activated phospho-Asp-tRNA(Asn) or phospho-Glu-tRNA(Gln). This chain is Aspartyl/glutamyl-tRNA(Asn/Gln) amidotransferase subunit C, found in Bradyrhizobium sp. (strain ORS 278).